The sequence spans 249 residues: Chitooligosaccharide deacetylase (249 aa).

2 residues coordinate Mg(2+): His61 and His125.

Belongs to the YdjC deacetylase family. ChbG subfamily. As to quaternary structure, homodimer. Requires Mg(2+) as cofactor.

The protein resides in the cytoplasm. It catalyses the reaction N,N'-diacetylchitobiose + H2O = N-acetyl-beta-D-glucosaminyl-(1-&gt;4)-D-glucosamine + acetate. It carries out the reaction diacetylchitobiose-6'-phosphate + H2O = N'-monoacetylchitobiose-6'-phosphate + acetate. It functions in the pathway glycan degradation; chitin degradation. Involved in the degradation of chitin. ChbG is essential for growth on the acetylated chitooligosaccharides chitobiose and chitotriose but is dispensable for growth on cellobiose and chitosan dimer, the deacetylated form of chitobiose. Deacetylation of chitobiose-6-P and chitotriose-6-P is necessary for both the activation of the chb promoter by the regulatory protein ChbR and the hydrolysis of phosphorylated beta-glucosides by the phospho-beta-glucosidase ChbF. Catalyzes the removal of only one acetyl group from chitobiose-6-P to yield monoacetylchitobiose-6-P, the inducer of ChbR and the substrate of ChbF. In Escherichia coli O17:K52:H18 (strain UMN026 / ExPEC), this protein is Chitooligosaccharide deacetylase.